A 504-amino-acid chain; its full sequence is UDP-GalNAc:beta-1,3-N-acetylgalactosaminyltransferase 2 (504 aa).

Over 1–3 (MRN) the chain is Cytoplasmic. The helical; Signal-anchor for type II membrane protein transmembrane segment at 4-24 (WLVLLCPCVLGAALHLWHLWL) threads the bilayer. Residues 25–504 (RSPPDPHNTG…DPCQCEAKVR (480 aa)) are Lumenal-facing. N-linked (GlcNAc...) asparagine glycosylation is found at N117 and N176.

The protein belongs to the glycosyltransferase 31 family. N-glycosylated. Present in testis (at protein level). In testis, it is mainly detected in the middle layers of seminiferous tubules at stages XII to II. Strongly expressed in primary and secondary spermatocytes and early round spermatids, but not in spermatogonia, elongating or elongated spermatids, or in Leydig or Sertoli cells.

It is found in the golgi apparatus membrane. Its subcellular location is the endoplasmic reticulum. The catalysed reaction is 3-O-(N-acetyl-beta-D-glucosaminyl-(1-&gt;4)-alpha-D-mannosyl)-L-threonyl-[protein] + UDP-N-acetyl-alpha-D-galactosamine = 3-O-[beta-D-GalNAc-(1-&gt;3)-beta-D-GlcNAc-(1-&gt;4)-alpha-D-Man]-L-Thr-[protein] + UDP + H(+). The protein operates within protein modification; protein glycosylation. Functionally, beta-1,3-N-acetylgalactosaminyltransferase that synthesizes a unique carbohydrate structure, GalNAc-beta-1-3GlcNAc, on N- and O-glycans. Has no galactose nor galactosaminyl transferase activity toward any acceptor substrate. Involved in alpha-dystroglycan (DAG1) glycosylation: acts coordinately with GTDC2/POMGnT2 to synthesize a GalNAc-beta3-GlcNAc-beta-terminus at the 4-position of protein O-mannose in the biosynthesis of the phosphorylated O-mannosyl trisaccharide (N-acetylgalactosamine-beta-3-N-acetylglucosamine-beta-4-(phosphate-6-)mannose), a carbohydrate structure present in alpha-dystroglycan, which is required for binding laminin G-like domain-containing extracellular proteins with high affinity. In Mus musculus (Mouse), this protein is UDP-GalNAc:beta-1,3-N-acetylgalactosaminyltransferase 2 (B3galnt2).